The chain runs to 906 residues: Inter-alpha-trypsin inhibitor heavy chain H1 (906 aa).

Residues 1-22 (MGLRGLLCVCLVSLLALQAVAA) form the signal peptide. Positions 23-29 (QGSPTRN) are excised as a propeptide. In terms of domain architecture, VIT spans 32-161 (GGKKRMAVDA…KATFRLTYEE (130 aa)). A glycan (S-linked (Hex...) cysteine) is linked at cysteine 55. The residue at position 124 (serine 124) is a Phosphoserine. Residues 287-470 (NVVFVIDISS…QQLQGFYEQV (184 aa)) form the VWFA domain. Phosphothreonine occurs at positions 397 and 402. A glycan (N-linked (GlcNAc...) asparagine) is linked at asparagine 583. Serine 643 carries O-linked (GalNAc...) serine glycosylation. Threonine 648 is a glycosylation site (O-linked (GalNAc...) threonine). Aspartate 667 carries the post-translational modification Aspartate 1-(chondroitin 4-sulfate)-ester. A propeptide spanning residues 668 to 906 (PHFLIHVPQK…HTDYIVPDIF (239 aa)) is cleaved from the precursor. Asparagine 745 carries an N-linked (GlcNAc...) asparagine glycan.

It belongs to the ITIH family. In terms of assembly, I-alpha-I plasma protease inhibitors are assembled from one or two heavy chains (HC) and one light chain, bikunin. Inter-alpha-inhibitor (I-alpha-I) is composed of ITIH1/HC1, ITIH2/HC2 and bikunin. Interacts with TNFAIP6 (via Link and CUB domains). Heavy chains are linked to bikunin via chondroitin 4-sulfate esterified to the alpha-carboxyl of the C-terminal aspartate after propeptide cleavage. Post-translationally, the S-linked glycan is composed of two 6-carbon sugars, possibly Glc or Gal.

The protein localises to the secreted. May act as a carrier of hyaluronan in serum or as a binding protein between hyaluronan and other matrix protein, including those on cell surfaces in tissues to regulate the localization, synthesis and degradation of hyaluronan which are essential to cells undergoing biological processes. In Bos taurus (Bovine), this protein is Inter-alpha-trypsin inhibitor heavy chain H1 (ITIH1).